Consider the following 123-residue polypeptide: Large ribosomal subunit protein bL20 (123 aa).

The protein belongs to the bacterial ribosomal protein bL20 family.

Its function is as follows. Binds directly to 23S ribosomal RNA and is necessary for the in vitro assembly process of the 50S ribosomal subunit. It is not involved in the protein synthesizing functions of that subunit. This Pseudothermotoga lettingae (strain ATCC BAA-301 / DSM 14385 / NBRC 107922 / TMO) (Thermotoga lettingae) protein is Large ribosomal subunit protein bL20.